A 1000-amino-acid chain; its full sequence is Bifunctional glutamine synthetase adenylyltransferase/adenylyl-removing enzyme (1000 aa).

An adenylyl removase region spans residues 1–481 (MTAPGRRSST…LHEKLFYRPL (481 aa)). The interval 487–1000 (QLAPGEARLS…AVVDEQFYGA (514 aa)) is adenylyl transferase.

The protein belongs to the GlnE family. Mg(2+) serves as cofactor.

It catalyses the reaction [glutamine synthetase]-O(4)-(5'-adenylyl)-L-tyrosine + phosphate = [glutamine synthetase]-L-tyrosine + ADP. The enzyme catalyses [glutamine synthetase]-L-tyrosine + ATP = [glutamine synthetase]-O(4)-(5'-adenylyl)-L-tyrosine + diphosphate. Involved in the regulation of glutamine synthetase GlnA, a key enzyme in the process to assimilate ammonia. When cellular nitrogen levels are high, the C-terminal adenylyl transferase (AT) inactivates GlnA by covalent transfer of an adenylyl group from ATP to specific tyrosine residue of GlnA, thus reducing its activity. Conversely, when nitrogen levels are low, the N-terminal adenylyl removase (AR) activates GlnA by removing the adenylyl group by phosphorolysis, increasing its activity. The regulatory region of GlnE binds the signal transduction protein PII (GlnB) which indicates the nitrogen status of the cell. This Streptomyces avermitilis (strain ATCC 31267 / DSM 46492 / JCM 5070 / NBRC 14893 / NCIMB 12804 / NRRL 8165 / MA-4680) protein is Bifunctional glutamine synthetase adenylyltransferase/adenylyl-removing enzyme.